A 208-amino-acid polypeptide reads, in one-letter code: Small ribosomal subunit protein uS4 (208 aa).

Residues 98–159 (RRLDNVAYRL…KSRKVAAISE (62 aa)) form the S4 RNA-binding domain.

This sequence belongs to the universal ribosomal protein uS4 family. In terms of assembly, part of the 30S ribosomal subunit. Contacts protein S5. The interaction surface between S4 and S5 is involved in control of translational fidelity.

One of the primary rRNA binding proteins, it binds directly to 16S rRNA where it nucleates assembly of the body of the 30S subunit. Functionally, with S5 and S12 plays an important role in translational accuracy. In Geobacter sp. (strain M21), this protein is Small ribosomal subunit protein uS4.